The following is a 426-amino-acid chain: Dihydroorotase (426 aa).

Positions 58 and 60 each coordinate Zn(2+). Residues 60–62 (HLR) and asparagine 92 contribute to the substrate site. Residues aspartate 150, histidine 177, and histidine 230 each coordinate Zn(2+). Substrate is bound at residue asparagine 276. Aspartate 303 is a binding site for Zn(2+). The active site involves aspartate 303. Residues histidine 307 and 321–322 (FG) each bind substrate.

This sequence belongs to the metallo-dependent hydrolases superfamily. DHOase family. Class I DHOase subfamily. Requires Zn(2+) as cofactor.

The enzyme catalyses (S)-dihydroorotate + H2O = N-carbamoyl-L-aspartate + H(+). Its pathway is pyrimidine metabolism; UMP biosynthesis via de novo pathway; (S)-dihydroorotate from bicarbonate: step 3/3. Its function is as follows. Catalyzes the reversible cyclization of carbamoyl aspartate to dihydroorotate. In Listeria monocytogenes serotype 4a (strain HCC23), this protein is Dihydroorotase.